Here is a 574-residue protein sequence, read N- to C-terminus: Regulatory protein NPR4 (574 aa).

The interval 1-21 is disordered; the sequence is MAATAIEPSSSISFTSSHLSN. A compositionally biased stretch (low complexity) spans 9–20; that stretch reads SSSISFTSSHLS. A Phosphoserine modification is found at serine 11. A BTB domain is found at 54–130; it reads TDAEIIIEEE…IYTGRLKPFP (77 aa). The C2HC NPR-type zinc finger occupies 133 to 147; sequence VSTCVDSVCAHDSCK. Residues cysteine 136, cysteine 141, histidine 143, and cysteine 146 each contribute to the Zn(2+) site. ANK repeat units lie at residues 252–280, 281–311, and 315–344; these read ERTGKVLKALDSDDVELVKLLLTESDITL, DQANGLHYAVAYSDPKVVTQVLDLDMADVNF, and RGYTVLHIAAMRREPTIIIPLIQKGANASD. A salicylic acid-binding core (SBC) region spans residues 373-516; it reads EPSKYRLCID…MDQYMDEEIP (144 aa). Residue arginine 419 participates in salicylate binding. Residues 521–574 form a disordered region; the sequence is PEKGTVKERRQKRMRYNELKNDVKKAYSKDKVARSCLSSSSPASSLREALENPT. The span at 535 to 553 shows a compositional bias: basic and acidic residues; that stretch reads RYNELKNDVKKAYSKDKVA. Residues 554–567 show a composition bias toward low complexity; that stretch reads RSCLSSSSPASSLR.

Belongs to the plant 'ANKYRIN-BTB/POZ' family. 'NPR1-like' subfamily. Forms homodimers, homotetramers and heterodimers with NPR3 in the presence of salicylic acid (SA). Interacts with TGA2, TGA3, TGA5, TGA6 and TGA7. Interacts with CUL3A, a core component of the cullin-RING ubiquitin ligases (CRL). Binds to NPR1; this interaction is disrupted by association with SA, probably due to conformational changes.

It is found in the nucleus. The protein operates within protein modification; protein ubiquitination. Functionally, salicylic acid (SA)-binding substrate-specific adapter of an E3 ubiquitin-protein ligase complex (CUL3-RBX1-BTB) which mediates the ubiquitination and subsequent proteasomal degradation of NPR1 in the absence of SA. Together with NPR3, acts as receptor of salicylic acid to monitor immunity in a NPR1-dependent manner and induce systemic acquired resistance (SAR). Involved in the regulation of basal defense responses against pathogens, and may be implicated in the cross-talk between the SA- and JA-dependent signaling pathways. The polypeptide is Regulatory protein NPR4 (Arabidopsis thaliana (Mouse-ear cress)).